The sequence spans 391 residues: Enoyl-CoA delta isomerase 2 (391 aa).

Residues M1–A36 constitute a mitochondrion transit peptide. Residues T37–A122 enclose the ACB domain. K49 carries the N6-acetyllysine; alternate modification. At K49 the chain carries N6-succinyllysine; alternate. K53 bears the N6-succinyllysine mark. K60 is modified (N6-acetyllysine; alternate). At K60 the chain carries N6-succinyllysine; alternate. An acyl-CoA is bound at residue Y64 to K68. An N6-succinyllysine mark is found at K68, K79, and K88. K90 carries the post-translational modification N6-acetyllysine; alternate. K90 bears the N6-succinyllysine; alternate mark. Position 90 (K90) interacts with an acyl-CoA. S99 is subject to Phosphoserine. An an acyl-CoA-binding site is contributed by Y109. S117 is subject to Phosphoserine. N6-succinyllysine occurs at positions 127 and 159. The tract at residues T149–P319 is ECH-like. S196–L200 lines the substrate pocket. K286 carries the post-translational modification N6-succinyllysine. Positions P389 to L391 match the Microbody targeting signal motif.

The protein in the C-terminal section; belongs to the enoyl-CoA hydratase/isomerase family. As to expression, liver (at protein level).

The protein localises to the peroxisome matrix. It is found in the mitochondrion. It carries out the reaction a (3Z)-enoyl-CoA = a 4-saturated (2E)-enoyl-CoA. It catalyses the reaction a (3E)-enoyl-CoA = a 4-saturated (2E)-enoyl-CoA. The catalysed reaction is (2E)-tetradecenoyl-CoA = (3Z)-tetradecenoyl-CoA. The enzyme catalyses (3E)-tetradecenoyl-CoA = (2E)-tetradecenoyl-CoA. It carries out the reaction (3E)-octenoyl-CoA = (2E)-octenoyl-CoA. It catalyses the reaction (3Z)-octenoyl-CoA = (2E)-octenoyl-CoA. The catalysed reaction is (3E)-nonenoyl-CoA = (2E)-nonenoyl-CoA. The protein operates within lipid metabolism; fatty acid beta-oxidation. Functionally, able to isomerize both 3-cis and 3-trans double bonds into the 2-trans form in a range of enoyl-CoA species. Has a preference for 3-trans substrates. The chain is Enoyl-CoA delta isomerase 2 from Rattus norvegicus (Rat).